A 438-amino-acid chain; its full sequence is 23S rRNA (uracil(1939)-C(5))-methyltransferase RlmD (438 aa).

One can recognise a TRAM domain in the interval F4–R68. [4Fe-4S] cluster is bound by residues C81, C87, C90, and C167. The S-adenosyl-L-methionine site is built by Q269, F298, N303, E319, N346, and D367. Residue C393 is the Nucleophile of the active site.

The protein belongs to the class I-like SAM-binding methyltransferase superfamily. RNA M5U methyltransferase family. RlmD subfamily.

The enzyme catalyses uridine(1939) in 23S rRNA + S-adenosyl-L-methionine = 5-methyluridine(1939) in 23S rRNA + S-adenosyl-L-homocysteine + H(+). In terms of biological role, catalyzes the formation of 5-methyl-uridine at position 1939 (m5U1939) in 23S rRNA. This is 23S rRNA (uracil(1939)-C(5))-methyltransferase RlmD from Edwardsiella ictaluri (strain 93-146).